Consider the following 429-residue polypeptide: MNHDQSHALFSRAQQLLPGGVNSPVRAFKSVGGEPFFVERADGAYLYDVDGNRYIDYVGSWGPMIVGHNHTAVRQAVKKAIDNGLSFGAPCAAEVTMAETITRLVPSCEMVRMVNSGTEATLSAIRLARGATGRNRIVKFEGCYHGHGDSFLVKAGSGMLTLGVPTSPGVPAGLSELTLTLPYNDFEAATALFEQQGDDIAGLIIEPVVGNANCIPPRDGYLQHLRELCTKHGTLLIFDEVMTGFRVALGGAQAHYGITPDLTTFGKIIGGGMPVGAYGGRRELMQQIAPAGPIYQAGTLSGNPVAMAAGLAMLELIQQPGFHADLAERTARLCAGLEAAAADAGVVVTTTCVGAMFGLFFTSEKVETYAQATACDIPAFNRFFHAMLDQGVFLAPSAYEAGFLSSAHDDAVIEATLAAARVAFKAAKG.

Position 267 is an N6-(pyridoxal phosphate)lysine (K267).

It belongs to the class-III pyridoxal-phosphate-dependent aminotransferase family. HemL subfamily. In terms of assembly, homodimer. The cofactor is pyridoxal 5'-phosphate.

It localises to the cytoplasm. It carries out the reaction (S)-4-amino-5-oxopentanoate = 5-aminolevulinate. Its pathway is porphyrin-containing compound metabolism; protoporphyrin-IX biosynthesis; 5-aminolevulinate from L-glutamyl-tRNA(Glu): step 2/2. The protein is Glutamate-1-semialdehyde 2,1-aminomutase of Stenotrophomonas maltophilia (strain R551-3).